Consider the following 293-residue polypeptide: 4-diphosphocytidyl-2-C-methyl-D-erythritol kinase (293 aa).

Lysine 10 is a catalytic residue. ATP is bound at residue proline 96–serine 106. Residue aspartate 138 is part of the active site.

This sequence belongs to the GHMP kinase family. IspE subfamily.

It carries out the reaction 4-CDP-2-C-methyl-D-erythritol + ATP = 4-CDP-2-C-methyl-D-erythritol 2-phosphate + ADP + H(+). It functions in the pathway isoprenoid biosynthesis; isopentenyl diphosphate biosynthesis via DXP pathway; isopentenyl diphosphate from 1-deoxy-D-xylulose 5-phosphate: step 3/6. In terms of biological role, catalyzes the phosphorylation of the position 2 hydroxy group of 4-diphosphocytidyl-2C-methyl-D-erythritol. The sequence is that of 4-diphosphocytidyl-2-C-methyl-D-erythritol kinase from Caulobacter sp. (strain K31).